The sequence spans 626 residues: MADINSKLEIGVTTGPIRGSRKIHVESARFPGLTVAMREIQLEPSSGEPPVRVYDTSGPYTDPKVTIDIAAGLPTLRRDWIMARGDVEEYDAREVKPEDNGLKGPDRSAGVPPFPNVVKRPLRAKAGQNVSQMHYARRGIITPEMEYVAIRENLGRKQAKEAMIRDGQDWGASIPDYVTPEFVRDEVARGRAIIPSNINHPESEPMAIGRNFLVKINANIGNSAVASDVASEVDKMVWSIRWGADTVMDLSTGRNIHDTREWILRNSPVPIGTVPIYQALEKVGGVAEDLTWEVFRDTLIEQAEQGVDYFTIHAGVRLPYIPLAAKRMTGIVSRGGSIMAKWCLAHHKESFLYENFDEITEIMKAYDVAYSLGDGLRPGSIYDANDEAQFAELYTLGELTKRAWEQDVQVMIEGPGHVPMHKIKENMTKQLEACGEAPFYTLGPLVTDIAPGYDHITSGIGAAQIGWYGTAMLCYVTPKEHLGLPDRDDVKVGVVTYKLAAHAADLAKGHPAAQARDDALSKARFEFRWRDQFNLSLDPETAEQYHDQTLPAEGAKTAHFCSMCGPKFCSMKISQEVRDFAAKQNAGIETFVANEAEAEAGMKAMSDKYDEMGRELYIGAGGREHD.

The span at 92–106 (AREVKPEDNGLKGPD) shows a compositional bias: basic and acidic residues. A disordered region spans residues 92–117 (AREVKPEDNGLKGPDRSAGVPPFPNV). Substrate is bound by residues Asn219, Met248, Tyr277, His313, 333–335 (SRG), 374–377 (DGLR), and Glu413. Zn(2+) is bound at residue His417. Tyr440 serves as a coordination point for substrate. His481 lines the Zn(2+) pocket. [4Fe-4S] cluster is bound by residues Cys561, Cys564, and Cys569.

This sequence belongs to the ThiC family. As to quaternary structure, homodimer. [4Fe-4S] cluster is required as a cofactor.

It catalyses the reaction 5-amino-1-(5-phospho-beta-D-ribosyl)imidazole + S-adenosyl-L-methionine = 4-amino-2-methyl-5-(phosphooxymethyl)pyrimidine + CO + 5'-deoxyadenosine + formate + L-methionine + 3 H(+). Its pathway is cofactor biosynthesis; thiamine diphosphate biosynthesis. Functionally, catalyzes the synthesis of the hydroxymethylpyrimidine phosphate (HMP-P) moiety of thiamine from aminoimidazole ribotide (AIR) in a radical S-adenosyl-L-methionine (SAM)-dependent reaction. This chain is Phosphomethylpyrimidine synthase, found in Novosphingobium aromaticivorans (strain ATCC 700278 / DSM 12444 / CCUG 56034 / CIP 105152 / NBRC 16084 / F199).